The sequence spans 148 residues: Single-stranded DNA-binding protein, mitochondrial (148 aa).

The transit peptide at 1–16 (MFRRPVVQVLRQFVRH) directs the protein to the mitochondrion. The region spanning 30–141 (LNRVQLLGRV…IIADNIIFLS (112 aa)) is the SSB domain. 2 positions are modified to phosphoserine: Ser67 and Ser79. An N6-acetyllysine modification is found at Lys113. Lys122 is subject to N6-succinyllysine.

As to quaternary structure, homotetramer. Interacts with MPG/AAG, through inhibition of its glycosylase activity it potentially prevents formation of DNA breaks in ssDNA, ensuring that base removal primarily occurs in dsDNA. Interacts with POLDIP2. Interacts with PRIMPOL.

It localises to the mitochondrion. The protein localises to the mitochondrion matrix. It is found in the mitochondrion nucleoid. Functionally, binds preferentially and cooperatively to pyrimidine rich single-stranded DNA (ss-DNA). In vitro, required to maintain the copy number of mitochondrial DNA (mtDNA) and plays a crucial role during mtDNA replication by stimulating the activity of the replisome components POLG and TWNK at the replication fork. Promotes the activity of the gamma complex polymerase POLG, largely by organizing the template DNA and eliminating secondary structures to favor ss-DNA conformations that facilitate POLG activity. In addition it is able to promote the 5'-3' unwinding activity of the mtDNA helicase TWNK. May also function in mtDNA repair. The sequence is that of Single-stranded DNA-binding protein, mitochondrial (SSBP1) from Bos taurus (Bovine).